The following is a 627-amino-acid chain: DNA-directed RNA polymerase subunit gamma (627 aa).

Zn(2+) contacts are provided by C70, C72, C85, and C88. Positions 468, 470, and 472 each coordinate Mg(2+).

It belongs to the RNA polymerase beta' chain family. RpoC1 subfamily. In terms of assembly, in cyanobacteria the RNAP catalytic core is composed of 2 alpha, 1 beta, 1 beta', 1 gamma and 1 omega subunit. When a sigma factor is associated with the core the holoenzyme is formed, which can initiate transcription. Mg(2+) is required as a cofactor. Requires Zn(2+) as cofactor.

It catalyses the reaction RNA(n) + a ribonucleoside 5'-triphosphate = RNA(n+1) + diphosphate. Its function is as follows. DNA-dependent RNA polymerase catalyzes the transcription of DNA into RNA using the four ribonucleoside triphosphates as substrates. The chain is DNA-directed RNA polymerase subunit gamma from Synechococcus sp. (strain JA-2-3B'a(2-13)) (Cyanobacteria bacterium Yellowstone B-Prime).